A 388-amino-acid polypeptide reads, in one-letter code: Pepsin A-3 (388 aa).

The first 15 residues, 1 to 15 (MKWLLLLGLVALSEC), serve as a signal peptide directing secretion. Positions 16-62 (IMYKVPLIRKKSLRRTLSERGLLKDFLKKHNLNPARKYFPQWKAPTL) are cleaved as a propeptide — activation peptide. The region spanning 76–385 (YFGTIGIGTP…DRANNQVGLA (310 aa)) is the Peptidase A1 domain. Residue Asp94 is part of the active site. 2 cysteine pairs are disulfide-bonded: Cys107–Cys112 and Cys268–Cys272. Asp277 is a catalytic residue. The cysteines at positions 311 and 344 are disulfide-linked.

It belongs to the peptidase A1 family.

The protein resides in the secreted. The catalysed reaction is Preferential cleavage: hydrophobic, preferably aromatic, residues in P1 and P1' positions. Cleaves 1-Phe-|-Val-2, 4-Gln-|-His-5, 13-Glu-|-Ala-14, 14-Ala-|-Leu-15, 15-Leu-|-Tyr-16, 16-Tyr-|-Leu-17, 23-Gly-|-Phe-24, 24-Phe-|-Phe-25 and 25-Phe-|-Tyr-26 bonds in the B chain of insulin.. Its function is as follows. Shows particularly broad specificity; although bonds involving phenylalanine and leucine are preferred, many others are also cleaved to some extent. This chain is Pepsin A-3 (PGA3), found in Homo sapiens (Human).